The chain runs to 1378 residues: DNA-directed RNA polymerase subunit beta (1378 aa).

This sequence belongs to the RNA polymerase beta chain family. The RNAP catalytic core consists of 2 alpha, 1 beta, 1 beta' and 1 omega subunit. When a sigma factor is associated with the core the holoenzyme is formed, which can initiate transcription.

The catalysed reaction is RNA(n) + a ribonucleoside 5'-triphosphate = RNA(n+1) + diphosphate. DNA-dependent RNA polymerase catalyzes the transcription of DNA into RNA using the four ribonucleoside triphosphates as substrates. This is DNA-directed RNA polymerase subunit beta from Agrobacterium fabrum (strain C58 / ATCC 33970) (Agrobacterium tumefaciens (strain C58)).